A 231-amino-acid chain; its full sequence is Large ribosomal subunit protein uL1 (231 aa).

The protein belongs to the universal ribosomal protein uL1 family. In terms of assembly, part of the 50S ribosomal subunit.

Functionally, binds directly to 23S rRNA. The L1 stalk is quite mobile in the ribosome, and is involved in E site tRNA release. Its function is as follows. Protein L1 is also a translational repressor protein, it controls the translation of the L11 operon by binding to its mRNA. In Pseudomonas aeruginosa (strain LESB58), this protein is Large ribosomal subunit protein uL1.